The following is a 382-amino-acid chain: Alkanesulfonate monooxygenase (382 aa).

Belongs to the SsuD family.

It catalyses the reaction an alkanesulfonate + FMNH2 + O2 = an aldehyde + FMN + sulfite + H2O + 2 H(+). Its function is as follows. Catalyzes the desulfonation of aliphatic sulfonates. This chain is Alkanesulfonate monooxygenase, found in Ectopseudomonas mendocina (strain ymp) (Pseudomonas mendocina).